Consider the following 305-residue polypeptide: Glycine--tRNA ligase alpha subunit (305 aa).

It belongs to the class-II aminoacyl-tRNA synthetase family. Tetramer of two alpha and two beta subunits.

It is found in the cytoplasm. The enzyme catalyses tRNA(Gly) + glycine + ATP = glycyl-tRNA(Gly) + AMP + diphosphate. The protein is Glycine--tRNA ligase alpha subunit of Streptococcus pneumoniae (strain ATCC 700669 / Spain 23F-1).